The primary structure comprises 292 residues: Acetylglutamate kinase (292 aa).

Residues 64–65, Arg86, and Asn190 each bind substrate; that span reads GG.

The protein belongs to the acetylglutamate kinase family. ArgB subfamily.

The protein resides in the cytoplasm. The catalysed reaction is N-acetyl-L-glutamate + ATP = N-acetyl-L-glutamyl 5-phosphate + ADP. Its pathway is amino-acid biosynthesis; L-arginine biosynthesis; N(2)-acetyl-L-ornithine from L-glutamate: step 2/4. Its function is as follows. Catalyzes the ATP-dependent phosphorylation of N-acetyl-L-glutamate. This is Acetylglutamate kinase from Geobacter sulfurreducens (strain ATCC 51573 / DSM 12127 / PCA).